Here is a 612-residue protein sequence, read N- to C-terminus: Dihydroxy-acid dehydratase (612 aa).

Position 81 (aspartate 81) interacts with Mg(2+). Cysteine 122 contributes to the [2Fe-2S] cluster binding site. Positions 123 and 124 each coordinate Mg(2+). N6-carboxylysine is present on lysine 124. Cysteine 193 contributes to the [2Fe-2S] cluster binding site. Glutamate 489 is a binding site for Mg(2+). Serine 515 functions as the Proton acceptor in the catalytic mechanism.

Belongs to the IlvD/Edd family. As to quaternary structure, homodimer. It depends on [2Fe-2S] cluster as a cofactor. Requires Mg(2+) as cofactor.

The catalysed reaction is (2R)-2,3-dihydroxy-3-methylbutanoate = 3-methyl-2-oxobutanoate + H2O. It catalyses the reaction (2R,3R)-2,3-dihydroxy-3-methylpentanoate = (S)-3-methyl-2-oxopentanoate + H2O. It participates in amino-acid biosynthesis; L-isoleucine biosynthesis; L-isoleucine from 2-oxobutanoate: step 3/4. Its pathway is amino-acid biosynthesis; L-valine biosynthesis; L-valine from pyruvate: step 3/4. Its function is as follows. Functions in the biosynthesis of branched-chain amino acids. Catalyzes the dehydration of (2R,3R)-2,3-dihydroxy-3-methylpentanoate (2,3-dihydroxy-3-methylvalerate) into 2-oxo-3-methylpentanoate (2-oxo-3-methylvalerate) and of (2R)-2,3-dihydroxy-3-methylbutanoate (2,3-dihydroxyisovalerate) into 2-oxo-3-methylbutanoate (2-oxoisovalerate), the penultimate precursor to L-isoleucine and L-valine, respectively. This chain is Dihydroxy-acid dehydratase, found in Azotobacter vinelandii (strain DJ / ATCC BAA-1303).